A 262-amino-acid chain; its full sequence is Proliferating cell nuclear antigen (262 aa).

Residues 61–80 (RCDRNIAMGVNLNSMSKILK) mediate DNA binding. Residue K164 forms a Glycyl lysine isopeptide (Lys-Gly) (interchain with G-Cter in ubiquitin) linkage.

It belongs to the PCNA family. As to quaternary structure, homotrimer. Forms a complex with activator 1 heteropentamer in the presence of ATP. Component of the replisome complex. In terms of processing, monoubiquitinated by the UBE2B-RAD18 complex on Lys-164. Monoubiquitination at Lys-164 also takes place in undamaged proliferating cells, and is mediated by the DCX(DTL) complex, leading to enhance PCNA-dependent translesion DNA synthesis.

The protein localises to the nucleus. Functionally, this protein is an auxiliary protein of DNA polymerase delta and is involved in the control of eukaryotic DNA replication by increasing the polymerase's processibility during elongation of the leading strand. This Coturnix japonica (Japanese quail) protein is Proliferating cell nuclear antigen (PCNA).